A 68-amino-acid polypeptide reads, in one-letter code: Large ribosomal subunit protein bL31 (68 aa).

Cys-16, Cys-18, Cys-37, and Cys-40 together coordinate Zn(2+).

Belongs to the bacterial ribosomal protein bL31 family. Type A subfamily. Part of the 50S ribosomal subunit. Zn(2+) is required as a cofactor.

Its function is as follows. Binds the 23S rRNA. The protein is Large ribosomal subunit protein bL31 of Aquifex aeolicus (strain VF5).